We begin with the raw amino-acid sequence, 63 residues long: Large ribosomal subunit protein bL28 (63 aa).

This sequence belongs to the bacterial ribosomal protein bL28 family.

The protein is Large ribosomal subunit protein bL28 (rpmB) of Selenomonas ruminantium.